The following is a 506-amino-acid chain: Aldehyde dehydrogenase (506 aa).

NAD(+) is bound at residue 240 to 245; sequence GSTEIG. Catalysis depends on residues glutamate 262 and cysteine 301.

Belongs to the aldehyde dehydrogenase family.

It carries out the reaction an aldehyde + NAD(+) + H2O = a carboxylate + NADH + 2 H(+). Its pathway is alcohol metabolism; ethanol degradation; acetate from ethanol: step 2/2. Its function is as follows. May be involved in V.cholerae virulence, as its expression is under the control of ToxR, a transcriptional activator of several genes associated with virulence. The sequence is that of Aldehyde dehydrogenase (aldA) from Vibrio cholerae serotype O1 (strain ATCC 39541 / Classical Ogawa 395 / O395).